Consider the following 462-residue polypeptide: tRNA modification GTPase MnmE (462 aa).

Arg-26, Glu-91, and Arg-130 together coordinate (6S)-5-formyl-5,6,7,8-tetrahydrofolate. A TrmE-type G domain is found at Gly-228–Phe-382. A K(+)-binding site is contributed by Asn-238. Residues Asn-238 to Gln-243, Thr-257 to Thr-263, and Asp-282 to Gly-285 contribute to the GTP site. A Mg(2+)-binding site is contributed by Ser-242. The K(+) site is built by Thr-257, Ile-259, and Thr-262. Residue Thr-263 participates in Mg(2+) binding. Lys-462 contributes to the (6S)-5-formyl-5,6,7,8-tetrahydrofolate binding site.

It belongs to the TRAFAC class TrmE-Era-EngA-EngB-Septin-like GTPase superfamily. TrmE GTPase family. In terms of assembly, homodimer. Heterotetramer of two MnmE and two MnmG subunits. K(+) is required as a cofactor.

The protein resides in the cytoplasm. Functionally, exhibits a very high intrinsic GTPase hydrolysis rate. Involved in the addition of a carboxymethylaminomethyl (cmnm) group at the wobble position (U34) of certain tRNAs, forming tRNA-cmnm(5)s(2)U34. The protein is tRNA modification GTPase MnmE of Streptococcus agalactiae.